A 364-amino-acid polypeptide reads, in one-letter code: Chorismate synthase (364 aa).

Arg-47 serves as a coordination point for NADP(+). FMN is bound by residues 124-126 (RGS), 240-241 (NA), Gly-284, 299-303 (KPTPS), and Arg-326.

Belongs to the chorismate synthase family. FMNH2 is required as a cofactor.

The enzyme catalyses 5-O-(1-carboxyvinyl)-3-phosphoshikimate = chorismate + phosphate. It participates in metabolic intermediate biosynthesis; chorismate biosynthesis; chorismate from D-erythrose 4-phosphate and phosphoenolpyruvate: step 7/7. Its function is as follows. Catalyzes the anti-1,4-elimination of the C-3 phosphate and the C-6 proR hydrogen from 5-enolpyruvylshikimate-3-phosphate (EPSP) to yield chorismate, which is the branch point compound that serves as the starting substrate for the three terminal pathways of aromatic amino acid biosynthesis. This reaction introduces a second double bond into the aromatic ring system. This Methanobrevibacter smithii (strain ATCC 35061 / DSM 861 / OCM 144 / PS) protein is Chorismate synthase.